We begin with the raw amino-acid sequence, 675 residues long: UvrABC system protein B (675 aa).

In terms of domain architecture, Helicase ATP-binding spans 32–417 (EGLSDGLAYQ…EHAGQVVEQV (386 aa)). Position 45 to 52 (45 to 52 (GVTGSGKT)) interacts with ATP. The Beta-hairpin signature appears at 98–121 (YYDYYQPEAYVPSRDLFIEKDSAI). The 167-residue stretch at 436–602 (QVDDLMSEIN…QIKKQVKDII (167 aa)) folds into the Helicase C-terminal domain. The UVR domain maps to 634-669 (IKEIAKLEKAMQQAARDLQFEEAAVLRDRIRDIKEN).

Belongs to the UvrB family. As to quaternary structure, forms a heterotetramer with UvrA during the search for lesions. Interacts with UvrC in an incision complex.

The protein localises to the cytoplasm. Its function is as follows. The UvrABC repair system catalyzes the recognition and processing of DNA lesions. A damage recognition complex composed of 2 UvrA and 2 UvrB subunits scans DNA for abnormalities. Upon binding of the UvrA(2)B(2) complex to a putative damaged site, the DNA wraps around one UvrB monomer. DNA wrap is dependent on ATP binding by UvrB and probably causes local melting of the DNA helix, facilitating insertion of UvrB beta-hairpin between the DNA strands. Then UvrB probes one DNA strand for the presence of a lesion. If a lesion is found the UvrA subunits dissociate and the UvrB-DNA preincision complex is formed. This complex is subsequently bound by UvrC and the second UvrB is released. If no lesion is found, the DNA wraps around the other UvrB subunit that will check the other stand for damage. The polypeptide is UvrABC system protein B (Neisseria meningitidis serogroup B (strain ATCC BAA-335 / MC58)).